A 352-amino-acid polypeptide reads, in one-letter code: Probable protein kinase DDB_G0291842 (352 aa).

Residues 1–57 (MRPLPDQSAFEDKSELVSKKQKNEDENNENRSPETPRTPKVCPKTPTKTPLRTPTKN) are disordered. The span at 10–34 (FEDKSELVSKKQKNEDENNENRSPE) shows a compositional bias: basic and acidic residues. Residues 38 to 56 (TPKVCPKTPTKTPLRTPTK) are compositionally biased toward low complexity. One can recognise a Protein kinase domain in the interval 77–331 (FEYINQIGEG…IQSLLKYDKL (255 aa)). ATP-binding positions include 83 to 91 (IGEGSFAKV) and K106. D207 acts as the Proton acceptor in catalysis. Mg(2+)-binding residues include N212 and D225.

The protein belongs to the protein kinase superfamily. Ser/Thr protein kinase family. WEE1 subfamily.

It catalyses the reaction L-seryl-[protein] + ATP = O-phospho-L-seryl-[protein] + ADP + H(+). It carries out the reaction L-threonyl-[protein] + ATP = O-phospho-L-threonyl-[protein] + ADP + H(+). This chain is Probable protein kinase DDB_G0291842, found in Dictyostelium discoideum (Social amoeba).